The primary structure comprises 311 residues: Olfactory receptor 5AN1 (311 aa).

The Extracellular portion of the chain corresponds to Met-1–Lys-26. Asn-6 is a glycosylation site (N-linked (GlcNAc...) asparagine). A helical transmembrane segment spans residues Val-27–Ile-47. Over Val-48–His-55 the chain is Cytoplasmic. The helical transmembrane segment at Leu-56–Ser-76 threads the bilayer. Residues Ser-77–Ile-100 are Extracellular-facing. Cys-98 and Cys-190 are disulfide-bonded. Residues Gln-101 to Tyr-121 traverse the membrane as a helical segment. The Cytoplasmic segment spans residues Asp-122 to Ser-134. Residues Ser-135 to Thr-155 traverse the membrane as a helical segment. The Extracellular segment spans residues Ala-156–Gln-197. The chain crosses the membrane as a helical span at residues Val-198–Ser-218. Residues Tyr-219 to Ala-238 are Cytoplasmic-facing. A helical transmembrane segment spans residues Phe-239 to Val-259. At Tyr-260–Asp-272 the chain is on the extracellular side. A helical membrane pass occupies residues Arg-273–Leu-293. Residues Arg-294 to Cys-311 lie on the Cytoplasmic side of the membrane.

This sequence belongs to the G-protein coupled receptor 1 family.

The protein localises to the cell membrane. Functionally, odorant receptor for musk, which specifically recognizes muscone, musk xylol, and musk ketone. Ligand-binding causes a conformation change that triggers signaling via G(s)-class of G alpha protein GNAL, activating adenylyl cyclase. This is Olfactory receptor 5AN1 from Homo sapiens (Human).